Here is a 108-residue protein sequence, read N- to C-terminus: Malonate decarboxylase acyl carrier protein (108 aa).

Ser35 carries the O-(phosphoribosyl dephospho-coenzyme A)serine modification.

It belongs to the MdcC family. In terms of processing, covalently binds the prosthetic group of malonate decarboxylase.

It is found in the cytoplasm. Subunit of malonate decarboxylase, it is an acyl carrier protein to which acetyl and malonyl thioester residues are bound via a 2'-(5''-phosphoribosyl)-3'-dephospho-CoA prosthetic group and turn over during the catalytic mechanism. This chain is Malonate decarboxylase acyl carrier protein, found in Burkholderia cepacia (Pseudomonas cepacia).